Here is a 241-residue protein sequence, read N- to C-terminus: ATP synthase subunit a (241 aa).

5 helical membrane-spanning segments follow: residues 30 to 50 (GQVF…VLVG), 89 to 109 (LPFI…GALI), 128 to 148 (INTT…AGLS), 193 to 213 (LAVG…VMLL), and 214 to 234 (GLFT…FYIG).

This sequence belongs to the ATPase A chain family. F-type ATPases have 2 components, CF(1) - the catalytic core - and CF(0) - the membrane proton channel. CF(1) has five subunits: alpha(3), beta(3), gamma(1), delta(1), epsilon(1). CF(0) has four main subunits: a, b, b' and c.

It localises to the cellular thylakoid membrane. In terms of biological role, key component of the proton channel; it plays a direct role in the translocation of protons across the membrane. The chain is ATP synthase subunit a from Synechococcus sp. (strain CC9605).